We begin with the raw amino-acid sequence, 298 residues long: Enoyl-CoA hydratase AKT6-1 (298 aa).

Residues 1 to 23 (MTFSTTKSVAMSPDDDAPSFDIN) form a disordered region.

This sequence belongs to the enoyl-CoA hydratase/isomerase family.

It functions in the pathway mycotoxin biosynthesis. In terms of biological role, enoyl-CoA hydratase; part of the gene clusters that mediate the biosynthesis of the host-selective toxins (HSTs) AK-toxins responsible for Japanese pear black spot disease by the Japanese pear pathotype. AK-toxins are esters of 9,10-epoxy 8-hydroxy 9-methyldecatrienoic acid (EDA). On cellular level, AK-toxins affect plasma membrane of susceptible cells and cause a sudden increase in loss of K(+) after a few minutes of toxin treatment. The acyl-CoA ligase AKT1, the hydrolase AKT2 and enoyl-CoA hydratase AKT3 are all involved in the biosynthesis of the AK-, AF- and ACT-toxin common 9,10-epoxy-8-hydroxy-9-methyl-decatrienoic acid (EDA) structural moiety. Part of the EDA biosynthesis occurs in the peroxisome since these 3 enzymes are localized in peroxisomes. The exact roles of the 3 enzymes, as well as of additional AK-toxin clusters enzymes, including AKT4, AKT6 and AKTS1, have still to be elucidated. The Cytochrome P450 monooxygenase AKT7 on the other side functions to limit production of EDA and AK-toxin, probably via the catalysis of a side reaction of EDA or its precursor. This chain is Enoyl-CoA hydratase AKT6-1, found in Alternaria alternata (Alternaria rot fungus).